Here is a 476-residue protein sequence, read N- to C-terminus: Homeobox protein invected (476 aa).

Disordered regions lie at residues 1–43 (MAAV…SEDI), 273–331 (KTRY…TSGD), and 347–381 (DRPS…AFSG). The segment covering 23-32 (SPNTRDTTSP) has biased composition (polar residues). 2 stretches are compositionally biased toward basic and acidic residues: residues 33-43 (ECHDDEKSEDI) and 292-305 (KLDE…KTPD). A compositionally biased stretch (low complexity) spans 318 to 331 (GSNSGSTSGATSGD). Positions 372–431 (EKRPRTAFSGPQLARLKHEFAENRYLTERRRQSLAAELGLAEAQIKIWFQNKRAKIKKAS) form a DNA-binding region, homeobox.

The protein belongs to the engrailed homeobox family. In terms of tissue distribution, expressed in the middle silk gland but not in the posterior silk gland during the fourth molt/fifth intermolt period.

It is found in the nucleus. Functionally, this protein might be involved in the compartmentalization of the silk gland. The sequence is that of Homeobox protein invected (INV) from Bombyx mori (Silk moth).